Here is a 227-residue protein sequence, read N- to C-terminus: MAYPFQLGLQDATSPIMEELLHFHDHTLMIVFLISSLVLYIISLMLTTKLTHTSTMDAQEVETVWTILPAIILILIALPSLRILYMMDEINNPSLTVKTMGHQWYWSYEYTDYEDLNFDSYMIPTQELKPGELRLLEVDNRVVLPMEMTVRMLISSEDVLHSWAVPSLGLKTDAIPGRLNQTTLMAMRPGLYYGQCSEICGSNHSFMPIVLEMVPLSYFETWSALMV.

Residues 1–14 (MAYPFQLGLQDATS) are Mitochondrial intermembrane-facing. Residues 15-45 (PIMEELLHFHDHTLMIVFLISSLVLYIISLM) form a helical membrane-spanning segment. At 46-59 (LTTKLTHTSTMDAQ) the chain is on the mitochondrial matrix side. A helical transmembrane segment spans residues 60-87 (EVETVWTILPAIILILIALPSLRILYMM). At 88 to 227 (DEINNPSLTV…YFETWSALMV (140 aa)) the chain is on the mitochondrial intermembrane side. Cu cation contacts are provided by histidine 161, cysteine 196, glutamate 198, cysteine 200, histidine 204, and methionine 207. Glutamate 198 provides a ligand contact to Mg(2+). Residue tyrosine 218 is modified to Phosphotyrosine.

Belongs to the cytochrome c oxidase subunit 2 family. Component of the cytochrome c oxidase (complex IV, CIV), a multisubunit enzyme composed of 14 subunits. The complex is composed of a catalytic core of 3 subunits MT-CO1, MT-CO2 and MT-CO3, encoded in the mitochondrial DNA, and 11 supernumerary subunits COX4I, COX5A, COX5B, COX6A, COX6B, COX6C, COX7A, COX7B, COX7C, COX8 and NDUFA4, which are encoded in the nuclear genome. The complex exists as a monomer or a dimer and forms supercomplexes (SCs) in the inner mitochondrial membrane with NADH-ubiquinone oxidoreductase (complex I, CI) and ubiquinol-cytochrome c oxidoreductase (cytochrome b-c1 complex, complex III, CIII), resulting in different assemblies (supercomplex SCI(1)III(2)IV(1) and megacomplex MCI(2)III(2)IV(2)). Found in a complex with TMEM177, COA6, COX18, COX20, SCO1 and SCO2. Interacts with TMEM177 in a COX20-dependent manner. Interacts with COX20. Interacts with COX16. It depends on Cu cation as a cofactor.

It localises to the mitochondrion inner membrane. The enzyme catalyses 4 Fe(II)-[cytochrome c] + O2 + 8 H(+)(in) = 4 Fe(III)-[cytochrome c] + 2 H2O + 4 H(+)(out). Its function is as follows. Component of the cytochrome c oxidase, the last enzyme in the mitochondrial electron transport chain which drives oxidative phosphorylation. The respiratory chain contains 3 multisubunit complexes succinate dehydrogenase (complex II, CII), ubiquinol-cytochrome c oxidoreductase (cytochrome b-c1 complex, complex III, CIII) and cytochrome c oxidase (complex IV, CIV), that cooperate to transfer electrons derived from NADH and succinate to molecular oxygen, creating an electrochemical gradient over the inner membrane that drives transmembrane transport and the ATP synthase. Cytochrome c oxidase is the component of the respiratory chain that catalyzes the reduction of oxygen to water. Electrons originating from reduced cytochrome c in the intermembrane space (IMS) are transferred via the dinuclear copper A center (CU(A)) of subunit 2 and heme A of subunit 1 to the active site in subunit 1, a binuclear center (BNC) formed by heme A3 and copper B (CU(B)). The BNC reduces molecular oxygen to 2 water molecules using 4 electrons from cytochrome c in the IMS and 4 protons from the mitochondrial matrix. The protein is Cytochrome c oxidase subunit 2 (MT-CO2) of Urocyon cinereoargenteus (Gray fox).